The following is a 104-amino-acid chain: Glycine-rich protein (104 aa).

The signal sequence occupies residues 1 to 18 (MKSMIAAILFALVATSLA).

This sequence belongs to the non-disulfide-bridged peptide (NDBP) superfamily. As to expression, expressed by the venom gland.

Its subcellular location is the secreted. This is Glycine-rich protein from Lychas mucronatus (Chinese swimming scorpion).